A 400-amino-acid chain; its full sequence is Subtilisin-like protease CPC735_013700 (400 aa).

A signal peptide spans 1–19; it reads MGFVKILSLSLAATAVADA. Positions 20 to 116 are excised as a propeptide; that stretch reads ATILSPRYPN…IEPNQIVTIS (97 aa). Residues 36–115 enclose the Inhibitor I9 domain; the sequence is YIVVMKDGVS…FIEPNQIVTI (80 aa). A Peptidase S8 domain is found at 126–400; that stretch reads SWGLPRISVK…RKLLYNNSGK (275 aa). Catalysis depends on charge relay system residues Asp161 and His192. N-linked (GlcNAc...) asparagine glycosylation occurs at Asn252. Ser346 serves as the catalytic Charge relay system. N-linked (GlcNAc...) asparagine glycosylation occurs at Asn396.

This sequence belongs to the peptidase S8 family.

The protein resides in the secreted. In terms of biological role, secreted subtilisin-like serine protease with keratinolytic activity that contributes to pathogenicity. The sequence is that of Subtilisin-like protease CPC735_013700 from Coccidioides posadasii (strain C735) (Valley fever fungus).